A 25-amino-acid chain; its full sequence is ATP-dependent 6-phosphofructokinase 2 (25 aa).

Gly11 is an ATP binding site.

It belongs to the phosphofructokinase type A (PFKA) family. ATP-dependent PFK group I subfamily. Prokaryotic clade 'B1' sub-subfamily. In terms of assembly, homotetramer. The cofactor is Mg(2+).

It is found in the cytoplasm. The enzyme catalyses beta-D-fructose 6-phosphate + ATP = beta-D-fructose 1,6-bisphosphate + ADP + H(+). Its pathway is carbohydrate degradation; glycolysis; D-glyceraldehyde 3-phosphate and glycerone phosphate from D-glucose: step 3/4. In contrast with PFK1 this enzyme is not affected by phosphoenolpyruvate. Catalyzes the phosphorylation of D-fructose 6-phosphate to fructose 1,6-bisphosphate by ATP, the first committing step of glycolysis. This chain is ATP-dependent 6-phosphofructokinase 2 (pfkA2), found in Thermus thermophilus (strain ATCC 27634 / DSM 579 / HB8).